Reading from the N-terminus, the 838-residue chain is Major vault protein (838 aa).

8 MVP repeats span residues 13–52, 53–114, 118–170, 171–223, 224–278, 280–328, 329–380, and 381–433; these read VHIL…VVPP, RFYC…FKLK, VNTG…HIIS, PNTA…ITLT, DTEA…IVLN, KEYC…NVVS, KDQA…IALD, and KNEG…CMSE.

In terms of assembly, the vault ribonucleoprotein particle is a huge (400 A x 670 A) cage structure of 12.9 MDa. It consists of a dimer of half-vaults, with each half-vault comprising 39 identical major vault protein (MVP) chains, PARP4 and one or more vault RNAs (vRNAs).

The protein resides in the cytoplasm. It localises to the nucleus. Its function is as follows. Required for normal vault structure. Vaults are multi-subunit structures that may act as scaffolds for proteins involved in signal transduction. Vaults may also play a role in nucleo-cytoplasmic transport. In Trypanosoma cruzi (strain CL Brener), this protein is Major vault protein.